Consider the following 4377-residue polypeptide: Ankyrin-3 (4377 aa).

Residues 1–44 (MAHAASQLKKNRDLEINAEEEPEKKRKHRKRSRDRKKKSDANAS) are disordered. A compositionally biased stretch (basic residues) spans 25-38 (KRKHRKRSRDRKKK). S39 is modified (phosphoserine). ANK repeat units lie at residues 73 to 102 (NGLN…NVDA), 106 to 135 (KGNT…NVNA), 139 to 168 (NGFT…SQSL), 172 to 201 (DGFT…KGKV), 203 to 230 (LPAL…NADV), 234 to 263 (SGFT…AVDF), 267 to 296 (NDIT…KIDA), 300 to 329 (DGLT…PILS), 333 to 362 (NGLS…PVDD), 366 to 395 (DYLT…NPNA), 399 to 428 (NGFT…SIQA), 432 to 461 (SGLT…SPNT), 465 to 494 (RGET…QVEA), 498 to 527 (DDQT…SPNA), 531 to 560 (SGYT…SLSI), 564 to 593 (KGFT…SPDA), 597 to 626 (SGLT…SPHA), 630 to 659 (NGYT…DANA), 663 to 692 (QGIA…NVNL), 696 to 725 (SGLT…HVDA), 729 to 758 (MGYT…KVNA), 762 to 791 (NGYT…SPNE), and 795 to 825 (NGNT…TMTT). T468 is modified (phosphoserine). The residue at position 623 (S623) is a Phosphoserine. Residues T765 and E791 each carry the phosphoserine modification. A phosphoserine mark is found at S847, S861, S867, S913, S916, S922, S957, S959, and S1113. 2 consecutive ZU5 domains span residues 984 to 1139 (FLVS…VVSR) and 1141 to 1288 (KQES…LADC). Positions 1273–1407 (VSFTTNVSAR…SIKIRDTSQE (135 aa)) are UPA domain. Phosphoserine is present on residues S1445, S1459, and S1470. A compositionally biased stretch (low complexity) spans 1519–1539 (SGFTSLSSSSSNTPSASPLKS). The interval 1519 to 1540 (SGFTSLSSSSSNTPSASPLKSI) is disordered. Phosphoserine occurs at positions 1622, 1625, 1632, 1651, 1658, 1984, 2111, 2123, and 2126. 15 disordered regions span residues 1968 to 1987 (VDNK…SPED), 2107 to 2159 (TILE…VPIP), 2176 to 2245 (YDPS…EETH), 2299 to 2322 (AVSP…DNQM), 2383 to 2433 (FPCS…ISDD), 2474 to 2508 (DVSH…KIAT), 2588 to 2751 (LTEV…VKKI), 2795 to 2824 (QSNE…MPDS), 3036 to 3067 (PPLE…DVFD), 3131 to 3272 (TFYT…KKHH), 3298 to 3516 (PVIR…SVFP), 3538 to 3607 (KGLD…HEGK), 3635 to 3718 (GEHT…DPKL), 3868 to 3897 (KATS…QSEK), and 4019 to 4090 (KKMQ…CERT). The span at 1977 to 1986 (PKSDKGHSPE) shows a compositional bias: basic and acidic residues. Residues 2115-2136 (FSQHDQDKSPLSDSGFETRSEK) are compositionally biased toward basic and acidic residues. Residues 2137 to 2146 (TPSAPQSAES) are compositionally biased toward polar residues. Basic and acidic residues predominate over residues 2299-2308 (AVSPDVHKSA). Residues 2390 to 2399 (GQQEEEELTA) show a composition bias toward acidic residues. Polar residues predominate over residues 2407–2417 (LESSRVNTPVS). Basic and acidic residues-rich tracts occupy residues 2497–2508 (GSDKRSREKIAT) and 2588–2612 (LTEV…PEKK). Positions 2622–2631 (SSQSPTSSSP) are enriched in low complexity. The span at 2706-2716 (SGFQLKQSKLS) shows a compositional bias: polar residues. Over residues 2720–2742 (LKFEQGTHAKSKDMSQEDRKSDG) the composition is skewed to basic and acidic residues. Residues 2796 to 2807 (SNEIVVNDSGSD) show a composition bias toward polar residues. Composition is skewed to polar residues over residues 3154-3186 (EQVS…SKTP) and 3214-3224 (KSTSLKQTTVE). 2 stretches are compositionally biased toward basic and acidic residues: residues 3227–3242 (AVER…DSNQ) and 3335–3361 (KLKE…KELE). The segment covering 3377-3402 (SPQNEIAQNGNNDQSITECSIATTAE) has biased composition (polar residues). The span at 3409 to 3428 (ATEIDSLDGYDLQDEDDGLT) shows a compositional bias: acidic residues. 2 stretches are compositionally biased toward basic and acidic residues: residues 3465-3481 (EVIE…DKPP) and 3549-3575 (RGDD…EDRS). A compositionally biased stretch (low complexity) spans 3576–3598 (PATTPDTTPARTPTDESTPTSEP). Residues 3637-3651 (HTSEGKSGDQGEGDK) show a composition bias toward basic and acidic residues. Polar residues-rich tracts occupy residues 3654 to 3669 (VTAT…TVET), 3676 to 3713 (ETPT…NTSK), 3880 to 3897 (HMSN…QSEK), and 4033 to 4052 (SRNT…VTTK). Residues 4053–4076 (SARDKKTEAAPLKSKSEKAGSEKR) show a composition bias toward basic and acidic residues. One can recognise a Death domain in the interval 4090 to 4174 (TDIRMAIVAD…DIVTLLEGPI (85 aa)). Residues S4211 and S4229 each carry the phosphoserine modification. Disordered stretches follow at residues 4251-4298 (NGSH…EPAS) and 4323-4377 (PVSM…KSHS). A compositionally biased stretch (polar residues) spans 4268–4277 (PESQNDVGKQ). A phosphoserine mark is found at S4290 and S4298. Over residues 4337–4347 (GKPRLSLHEEE) the composition is skewed to basic and acidic residues. S4350 is modified (phosphoserine). Residues 4362 to 4377 (VKTKKEIRHVEKKSHS) are compositionally biased toward basic residues.

As to quaternary structure, directly interacts with DMD and betaDAG1. This interaction does not interfere with binding between DMD and betaDAG1. It is also required for DMD and betaDAG1 retention at costameres. Interacts (via N-terminal ANK repeats) with SCHIP1 isoform 5 (via C-terminus); this interaction is required for the localization at axon initial segments (AISs) and nodes of Ranvier (NRs). May be a constituent of a NFASC/NRCAM/ankyrin G complex. Interacts with RHBG. Interacts with PLEC and FLNC. Interacts with KCNA1; this inhibits channel activity. Interacts (via ANK repeats) with IQCJ-SCHIP1; required for IQCJ-SCHIP1 localization at axon initial segments (AIS) and nodes of Ranvier. Interacts with SCHIP1. Interacts with SCN5A. Interacts with PKP2 and GJA1/CX43. Expressed in brain, neurons, muscles and other tissues.

It localises to the cytoplasm. It is found in the cytoskeleton. The protein resides in the cell projection. The protein localises to the axon. Its subcellular location is the cell membrane. It localises to the sarcolemma. It is found in the postsynaptic cell membrane. The protein resides in the lysosome. The protein localises to the T-tubule. Its subcellular location is the golgi apparatus. Its function is as follows. Membrane-cytoskeleton linker. May participate in the maintenance/targeting of ion channels and cell adhesion molecules at the nodes of Ranvier and axonal initial segments. In skeletal muscle, required for costamere localization of DMD and betaDAG1. Regulates KCNA1 channel activity in function of dietary Mg(2+) levels, and thereby contributes to the regulation of renal Mg(2+) reabsorption. Required for intracellular adhesion and junctional conductance in myocytes, potentially via stabilization of GJA1/CX43 protein abundance and promotion of PKP2, GJA1/CX43, and SCN5A/Nav1.5 localization to cell-cell junctions. May be part of a Golgi-specific membrane cytoskeleton in association with beta-spectrin. The polypeptide is Ankyrin-3 (Homo sapiens (Human)).